The chain runs to 113 residues: Large ribosomal subunit protein bL19 (113 aa).

It belongs to the bacterial ribosomal protein bL19 family.

In terms of biological role, this protein is located at the 30S-50S ribosomal subunit interface and may play a role in the structure and function of the aminoacyl-tRNA binding site. In Corynebacterium urealyticum (strain ATCC 43042 / DSM 7109), this protein is Large ribosomal subunit protein bL19.